A 140-amino-acid polypeptide reads, in one-letter code: Putative 6-pyruvoyl tetrahydrobiopterin synthase (140 aa).

H19 is a binding site for Zn(2+). The active-site Proton acceptor is the C38. Zn(2+)-binding residues include H44 and H46. Active-site charge relay system residues include H84 and E129.

Belongs to the PTPS family. Homohexamer formed of two homotrimers in a head to head fashion. Zn(2+) is required as a cofactor.

It carries out the reaction 7,8-dihydroneopterin 3'-triphosphate = 6-pyruvoyl-5,6,7,8-tetrahydropterin + triphosphate + H(+). Its pathway is cofactor biosynthesis; tetrahydrobiopterin biosynthesis; tetrahydrobiopterin from 7,8-dihydroneopterin triphosphate: step 1/3. Involved in the biosynthesis of tetrahydrobiopterin, an essential cofactor of aromatic amino acid hydroxylases. Catalyzes the transformation of 7,8-dihydroneopterin triphosphate into 6-pyruvoyl tetrahydropterin. This chain is Putative 6-pyruvoyl tetrahydrobiopterin synthase (ptps-1), found in Caenorhabditis elegans.